The primary structure comprises 300 residues: Lipoyl synthase 2 (300 aa).

C46, C51, C57, C72, C76, C79, and S294 together coordinate [4Fe-4S] cluster. The Radical SAM core domain maps to Y58 to S283.

This sequence belongs to the radical SAM superfamily. Lipoyl synthase family. It depends on [4Fe-4S] cluster as a cofactor.

The protein localises to the cytoplasm. The catalysed reaction is [[Fe-S] cluster scaffold protein carrying a second [4Fe-4S](2+) cluster] + N(6)-octanoyl-L-lysyl-[protein] + 2 oxidized [2Fe-2S]-[ferredoxin] + 2 S-adenosyl-L-methionine + 4 H(+) = [[Fe-S] cluster scaffold protein] + N(6)-[(R)-dihydrolipoyl]-L-lysyl-[protein] + 4 Fe(3+) + 2 hydrogen sulfide + 2 5'-deoxyadenosine + 2 L-methionine + 2 reduced [2Fe-2S]-[ferredoxin]. It functions in the pathway protein modification; protein lipoylation via endogenous pathway; protein N(6)-(lipoyl)lysine from octanoyl-[acyl-carrier-protein]: step 2/2. Functionally, catalyzes the radical-mediated insertion of two sulfur atoms into the C-6 and C-8 positions of the octanoyl moiety bound to the lipoyl domains of lipoate-dependent enzymes, thereby converting the octanoylated domains into lipoylated derivatives. This Nostoc sp. (strain PCC 7120 / SAG 25.82 / UTEX 2576) protein is Lipoyl synthase 2.